The primary structure comprises 724 residues: Solute carrier organic anion transporter family member 4C1 (724 aa).

Residues 1 to 80 (MQGSKGVENP…PPGSQLSELE (80 aa)) are disordered. Topologically, residues 1–101 (MQGSKGVENP…QCLQRCNNPK (101 aa)) are cytoplasmic. Phosphoserine occurs at positions 15 and 16. Threonine 19 carries the post-translational modification Phosphothreonine. Phosphoserine is present on residues serine 24, serine 26, and serine 28. The span at 25–46 (ASPSQVEVSAVASRNQNGGSQP) shows a compositional bias: polar residues. A helical transmembrane segment spans residues 102–122 (GFLLHYCLLALTQGIVVNGLV). At 123–141 (NISISTIEKRYEMKSSLTG) the chain is on the extracellular side. A helical membrane pass occupies residues 142 to 162 (LISSSYDISFCVLSLFVSFFG). Residues 163-168 (ERGHKP) lie on the Cytoplasmic side of the membrane. Residues 169-193 (RWLAFASFMIGLGALVFSLPHFFSG) form a helical membrane-spanning segment. The Extracellular portion of the chain corresponds to 194–218 (RYELGTIFEDTCLTRNSTRCASSTS). A helical transmembrane segment spans residues 219–249 (LLSNYFYVFVLGQLLLGTGGTPLYTLGTAFI). Topologically, residues 250-269 (DDSVPTHKSSLYIGIGYSMS) are cytoplasmic. Residues 270–290 (ILGPAIGYVLGGQLLTMYIDV) form a helical membrane-spanning segment. At 291 to 306 (AMGQSSDLTEDDPRWL) the chain is on the extracellular side. The helical transmembrane segment at 307–331 (GAWWIGFLLAWLFAWSLIMPFSCFP) threads the bilayer. Over 332 to 376 (KHLPGTAKIQAGKTSQTHQNNSTSFQHMDENFGKSIKDFPTAVKN) the chain is Cytoplasmic. Residues 377–398 (LMRNTVFICLVLSTTSEALVTT) form a helical membrane-spanning segment. Over 399–418 (GFATFLPKFIENQFGLTSSF) the chain is Extracellular. The chain crosses the membrane as a helical span at residues 419 to 442 (AATLGGAVLIPGAALGQILGGVLV). At 443-446 (SKFK) the chain is on the cytoplasmic side. A helical membrane pass occupies residues 447 to 470 (MKCKNTMKFALCTSGVALMLSFVF). The Extracellular segment spans residues 471 to 580 (IYAKCENGPF…KTQCSNLPIF (110 aa)). The Kazal-like domain occupies 494-549 (GNLTAPCNANCNCLRSYYYPLCGSDGVQYFSPCFAGCLNSVSNRKPKAYYNCSCIE). Intrachain disulfides connect cysteine 500-cysteine 530, cysteine 506-cysteine 526, and cysteine 515-cysteine 547. Residues 581-603 (LGIFFITVIFTFMAGTPITVSIL) traverse the membrane as a helical segment. At 604-612 (RCVNHRQRS) the chain is on the cytoplasmic side. The chain crosses the membrane as a helical span at residues 613 to 638 (LALGVQFMLLRLLGTIPGPIIFGVTI). At 639 to 672 (DSTCVLWDINECGTKGACWIYDNIRMAHMLVAIS) the chain is on the extracellular side. Residues 673 to 690 (VTCKVITIFFNGLAIVLY) traverse the membrane as a helical segment. Topologically, residues 691–724 (KPPPPGTEVSFQSQNVVVSTITVEEDLNKIENEG) are cytoplasmic.

The protein belongs to the organo anion transporter (TC 2.A.60) family. Predominantly expressed in kidney and lung but also weakly expressed in brain. Localizes primarily in the proximal straight tubules, the S3 fraction of the nephron.

Its subcellular location is the basolateral cell membrane. The protein resides in the apical cell membrane. It carries out the reaction estrone 3-sulfate(out) = estrone 3-sulfate(in). It catalyses the reaction L-thyroxine(out) = L-thyroxine(in). The enzyme catalyses 3,3',5-triiodo-L-thyronine(out) = 3,3',5-triiodo-L-thyronine(in). The catalysed reaction is chenodeoxycholate(out) = chenodeoxycholate(in). It carries out the reaction glycocholate(out) = glycocholate(in). It catalyses the reaction L-homoarginine(in) = L-homoarginine(out). The enzyme catalyses L-arginine(in) = L-arginine(out). The catalysed reaction is N(omega),N(omega)-dimethyl-L-arginine(out) = N(omega),N(omega)-dimethyl-L-arginine(in). Functionally, mediates the transport of organic anions such as steroids (estrone 3-sulfate, chenodeoxycholate, glycocholate) and thyroid hormones (3,3',5-triiodo-L-thyronine (T3), L-thyroxine (T4)), in the kidney. Capable of transporting cAMP and pharmacological substances such as digoxin, ouabain and methotrexate. Transport is independent of sodium, chloride ion, and ATP. Transport activity is stimulated by an acidic extracellular environment due to increased substrate affinity to the transporter. The driving force for this transport activity is currently not known. The role of hydrogencarbonate (HCO3(-), bicarbonate) as the probable counteranion that exchanges for organic anions is still not well defined. Functions as an uptake transporter at the apical membrane, suggesting a role in renal reabsorption. Involved in the renal secretion of the uremic toxin ADMA (N(omega),N(omega)-dimethyl-L-arginine or asymmetrical dimethylarginine), which is associated to cardiovascular events and mortality, and the structurally related amino acids L-arginine and L-homoarginine (a cardioprotective biomarker). Can act bidirectionally, suggesting a dual protective role of this transport protein; exporting L-homoarginine after being synthesized in proximal tubule cells, and mediating uptake of ADMA from the blood into proximal tubule cells where it is degraded by the enzyme dimethylarginine dimethylaminohydrolase 1 (DDAH1). May be involved in sperm maturation by enabling directed movement of organic anions and compounds within or between cells. This ion-transporting process is important to maintain the strict epididymal homeostasis necessary for sperm maturation. May have a role in secretory functions since seminal vesicle epithelial cells are assumed to secrete proteins involved in decapacitation by modifying surface proteins to facilitate the acquisition of the ability to fertilize the egg. The protein is Solute carrier organic anion transporter family member 4C1 of Rattus norvegicus (Rat).